The primary structure comprises 346 residues: tRNA N6-adenosine threonylcarbamoyltransferase (346 aa).

Residues H111 and H115 each coordinate Fe cation. Substrate is bound by residues L134 to G138, D167, G180, D184, and N279. Residue D307 coordinates Fe cation.

The protein belongs to the KAE1 / TsaD family. It depends on Fe(2+) as a cofactor.

Its subcellular location is the cytoplasm. The enzyme catalyses L-threonylcarbamoyladenylate + adenosine(37) in tRNA = N(6)-L-threonylcarbamoyladenosine(37) in tRNA + AMP + H(+). Its function is as follows. Required for the formation of a threonylcarbamoyl group on adenosine at position 37 (t(6)A37) in tRNAs that read codons beginning with adenine. Is involved in the transfer of the threonylcarbamoyl moiety of threonylcarbamoyl-AMP (TC-AMP) to the N6 group of A37, together with TsaE and TsaB. TsaD likely plays a direct catalytic role in this reaction. The chain is tRNA N6-adenosine threonylcarbamoyltransferase from Nostoc sp. (strain PCC 7120 / SAG 25.82 / UTEX 2576).